The following is a 110-amino-acid chain: Cysteine-rich and transmembrane domain-containing protein 1 (110 aa).

The span at 1–18 (MNYENPPPYASPPAPYPP) shows a compositional bias: pro residues. A disordered region spans residues 1–45 (MNYENPPPYASPPAPYPPYGQQQPSYPVPNQYPGNPPGPVGYQPA). The segment covering 19–29 (YGQQQPSYPVP) has biased composition (low complexity). A helical transmembrane segment spans residues 87–104 (SGESACLTACWTALCCCC).

Belongs to the CYSTM1 family.

The protein localises to the membrane. The protein is Cysteine-rich and transmembrane domain-containing protein 1 (cystm1) of Xenopus tropicalis (Western clawed frog).